The primary structure comprises 1853 residues: Cellulosomal-scaffolding protein A (1853 aa).

A signal peptide spans 1–28 (MRKVISMLLVVAMLTTIFAAMIPQTVSA). 2 consecutive Cohesin domains span residues 29 to 182 (ATMT…VPSD) and 183 to 322 (GVVV…VNVG). Linker (Pro/Thr-rich) regions lie at residues 323–363 (NATP…PANT) and 523–559 (GGSV…SDDP). The segment covering 323-364 (NATPTKGATPTNTATPTKSATATPTRPSVPTNTPTNTPANTP) has biased composition (low complexity). Disordered stretches follow at residues 323–367 (NATP…PVSG) and 525–559 (SVVP…SDDP). Residues 365–523 (VSGNLKVEFY…GVLVWGKEPG (159 aa)) enclose the CBM3 domain. Low complexity predominate over residues 525–555 (SVVPSTQPVTTPPATTKPPATTKPPATTIPP). Cohesin domains are found at residues 560–704 (NAIK…NVGD), 724–866 (AVRI…VNVG), 889–1031 (AVRI…VNVG), 1054–1196 (AVRI…VNVG), 1219–1361 (AVRI…VNVG), 1384–1526 (AVRI…VNVG), and 1548–1690 (KLTL…VLVT). Positions 1785–1852 (IMMWVGDIVK…FGATSSDYDA (68 aa)) constitute a Dockerin domain.

O-glycosylated on most but not all Thr residues of the linker units. The reducing sugar is galactopyranose.

It localises to the secreted. In terms of biological role, acts as a scaffolding protein in the cellulosome. It promotes binding of cellulose to the catalytic domains of the cellulolytic enzymes. The chain is Cellulosomal-scaffolding protein A (cipA) from Acetivibrio thermocellus (strain ATCC 27405 / DSM 1237 / JCM 9322 / NBRC 103400 / NCIMB 10682 / NRRL B-4536 / VPI 7372) (Clostridium thermocellum).